A 353-amino-acid polypeptide reads, in one-letter code: MEESQGYLELNKFLQNDFLYPLLFQEYIYAVAHDHILNRCILSDNLSYDNKSSSLIVKRLITRMSQPNHLIISDNDSNQNQFLXHNKNFDYQNQMISEGFAVVVEIQFSLRLVFSLERKEIVKSHNLRSIHSIFPFLEDNFLHLNYVSDILIXHSLHLEILVQTLRYWVKDASSLHLLRFFLYEYQNRNSLITPTPKKSISIVSKRNQRLFLILYNSYVCEYESIFIFICNQSSHLRSISSGTLFERIYFYGKIKHLVEVFYTDFPTVLWLFKVPFMHYVRYQGKSILASKGAPLLLNKWKYYLVNFWQCNFYLWSQSGRIHINQLSKNSLNFLGYLSSVRLNPSAVRSQMLE.

Belongs to the intron maturase 2 family. MatK subfamily.

Its subcellular location is the plastid. The protein resides in the chloroplast. In terms of biological role, usually encoded in the trnK tRNA gene intron. Probably assists in splicing its own and other chloroplast group II introns. The chain is Maturase K (matK) from Micranthes punctata (Dotted saxifrage).